The primary structure comprises 86 residues: Electron transfer flavoprotein regulatory factor 1 (86 aa).

Belongs to the complex I LYR family.

The protein localises to the mitochondrion. Acts as a regulator of the electron transfer flavoprotein by promoting the removal of flavin from the ETF holoenzyme (composed of ETFA and ETFB). The protein is Electron transfer flavoprotein regulatory factor 1 of Taeniopygia guttata (Zebra finch).